The chain runs to 495 residues: Trimethylamine methyltransferase MttB (495 aa).

A non-standard amino acid (pyrrolysine) is located at residue pyrrolysine 334.

Belongs to the trimethylamine methyltransferase family. Can form a complex with MttC.

It carries out the reaction Co(I)-[trimethylamine-specific corrinoid protein] + trimethylamine + H(+) = methyl-Co(III)-[trimethylamine-specific corrinoid protein] + dimethylamine. It participates in one-carbon metabolism; methanogenesis from trimethylamine. Catalyzes the transfer of a methyl group from trimethylamine to the corrinoid cofactor of MttC. The polypeptide is Trimethylamine methyltransferase MttB (Methanosarcina barkeri).